The following is a 98-amino-acid chain: MNRPVFLVLLLTGFLCIAAQEANVAHHYCGRHLANTLADLCWDTSVEKRSESSLASYSSRGWPWLPTPNFNKRAIKKRGVVDECCIQPCTLDVLATYC.

A signal peptide spans 1–19; that stretch reads MNRPVFLVLLLTGFLCIAA. At glutamine 20 the chain carries Pyrrolidone carboxylic acid. 3 cysteine pairs are disulfide-bonded: cysteine 29-cysteine 85, cysteine 41-cysteine 98, and cysteine 84-cysteine 89. Residues 50-75 constitute a propeptide, c peptide like; sequence SESSLASYSSRGWPWLPTPNFNKRAI.

It belongs to the insulin family. As to quaternary structure, heterodimer of a B chain and an A chain linked by two disulfide bonds.

It is found in the secreted. In terms of biological role, PTTH is a brain peptide responsible for activation of prothoracic glands to produce ecdysone in insects. In Bombyx mori (Silk moth), this protein is Bombyxin E-1 (BBXE1).